The chain runs to 379 residues: Cell division protein FtsZ (379 aa).

GTP is bound by residues 18-22 (GGGVN), 105-107 (GTG), Glu136, Arg140, and Asp184.

This sequence belongs to the FtsZ family. In terms of assembly, homodimer. Polymerizes to form a dynamic ring structure in a strictly GTP-dependent manner. Interacts directly with several other division proteins.

The protein resides in the cytoplasm. Essential cell division protein that forms a contractile ring structure (Z ring) at the future cell division site. The regulation of the ring assembly controls the timing and the location of cell division. One of the functions of the FtsZ ring is to recruit other cell division proteins to the septum to produce a new cell wall between the dividing cells. Binds GTP and shows GTPase activity. The polypeptide is Cell division protein FtsZ (Mycobacterium bovis (strain ATCC BAA-935 / AF2122/97)).